The following is a 416-amino-acid chain: Peptide chain release factor subunit 1 (416 aa).

It belongs to the eukaryotic release factor 1 family. As to quaternary structure, heterodimer of two subunits, one of which binds GTP.

It localises to the cytoplasm. In terms of biological role, directs the termination of nascent peptide synthesis (translation) in response to the termination codons UAA, UAG and UGA. The chain is Peptide chain release factor subunit 1 from Haloquadratum walsbyi (strain DSM 16790 / HBSQ001).